The chain runs to 185 residues: Peptide deformylase (185 aa).

Residues C94 and H136 each contribute to the Fe cation site. Residue E137 is part of the active site. H140 is a Fe cation binding site.

Belongs to the polypeptide deformylase family. Fe(2+) serves as cofactor.

It carries out the reaction N-terminal N-formyl-L-methionyl-[peptide] + H2O = N-terminal L-methionyl-[peptide] + formate. Its function is as follows. Removes the formyl group from the N-terminal Met of newly synthesized proteins. Requires at least a dipeptide for an efficient rate of reaction. N-terminal L-methionine is a prerequisite for activity but the enzyme has broad specificity at other positions. The sequence is that of Peptide deformylase from Chlorobium phaeobacteroides (strain BS1).